The primary structure comprises 415 residues: Gamma-glutamyl phosphate reductase (415 aa).

The protein belongs to the gamma-glutamyl phosphate reductase family.

It localises to the cytoplasm. It catalyses the reaction L-glutamate 5-semialdehyde + phosphate + NADP(+) = L-glutamyl 5-phosphate + NADPH + H(+). It functions in the pathway amino-acid biosynthesis; L-proline biosynthesis; L-glutamate 5-semialdehyde from L-glutamate: step 2/2. Its function is as follows. Catalyzes the NADPH-dependent reduction of L-glutamate 5-phosphate into L-glutamate 5-semialdehyde and phosphate. The product spontaneously undergoes cyclization to form 1-pyrroline-5-carboxylate. The protein is Gamma-glutamyl phosphate reductase of Bacillus cereus (strain 03BB102).